Consider the following 468-residue polypeptide: Replication factor C large subunit (468 aa).

An ATP-binding site is contributed by 50–57 (GPPGSGKT). Residues 422 to 456 (EEKAVEEKVEEEEAEEEEEEERKEEEKPKAEKKKG) form a disordered region. Acidic residues predominate over residues 429 to 444 (KVEEEEAEEEEEEERK).

It belongs to the activator 1 small subunits family. RfcL subfamily. As to quaternary structure, heteromultimer composed of small subunits (RfcS) and large subunits (RfcL).

In terms of biological role, part of the RFC clamp loader complex which loads the PCNA sliding clamp onto DNA. The sequence is that of Replication factor C large subunit from Pyrococcus horikoshii (strain ATCC 700860 / DSM 12428 / JCM 9974 / NBRC 100139 / OT-3).